Here is an 805-residue protein sequence, read N- to C-terminus: Leucine--tRNA ligase (805 aa).

The 'HIGH' region signature appears at 40–51 (PYPSGAGLHVGH). A 'KMSKS' region motif is present at residues 576 to 580 (KMSKS). Lys-579 contributes to the ATP binding site.

This sequence belongs to the class-I aminoacyl-tRNA synthetase family.

It localises to the cytoplasm. The enzyme catalyses tRNA(Leu) + L-leucine + ATP = L-leucyl-tRNA(Leu) + AMP + diphosphate. This chain is Leucine--tRNA ligase, found in Geobacillus kaustophilus (strain HTA426).